We begin with the raw amino-acid sequence, 350 residues long: Glycosyltransferase 8 domain-containing protein 2 (350 aa).

Over 1–6 (MALLRK) the chain is Cytoplasmic. The helical; Signal-anchor for type II membrane protein transmembrane segment at 7–24 (INQVLLFLLIVTLCGILY) threads the bilayer. The Lumenal segment spans residues 25 to 349 (KKVHKGTMLR…AGIFKLHHPN (325 aa)). Asparagine 234 carries N-linked (GlcNAc...) asparagine glycosylation.

The protein belongs to the glycosyltransferase 8 family.

The protein resides in the membrane. The polypeptide is Glycosyltransferase 8 domain-containing protein 2 (GLT8D2) (Bos taurus (Bovine)).